Consider the following 1028-residue polypeptide: Collagen alpha-1(VI) chain (1028 aa).

A signal peptide spans 1-19 (MRAARALLPLLLQACWTAA). The segment at 20–256 (QDEPETPRAV…CCSFECQPAR (237 aa)) is N-terminal globular domain. A VWFA 1 domain is found at 37–235 (DLFFVLDTSE…EAISQTIDTI (199 aa)). Asn212 carries an N-linked (GlcNAc...) asparagine glycan. The interval 254-590 (PARGPPGLRG…GPPGHQGPPG (337 aa)) is disordered. The triple-helical region stretch occupies residues 257-592 (GPPGLRGDPG…PGHQGPPGPD (336 aa)). The Cell attachment site motif lies at 262–264 (RGD). Basic and acidic residues-rich tracts occupy residues 268 to 285 (EGERGKPGLPGEKGEAGD) and 301 to 334 (KGEKGSRGEKGSRGPKGYKGEKGKRGIDGVDGVK). The span at 384–394 (RPGSSGPSGDE) shows a compositional bias: low complexity. The short motif at 442–444 (RGD) is the Cell attachment site element. Residues 457-471 (EGPVGVPGDPGEAGP) show a composition bias toward low complexity. The Cell attachment site motif lies at 478-480 (RGD). The segment covering 483-493 (PPGSEGARGAP) has biased composition (low complexity). N-linked (GlcNAc...) asparagine glycans are attached at residues Asn516 and Asn537. The segment covering 550–560 (GEAGDPGDDNN) has biased composition (acidic residues). Positions 579–590 (PQGPPGHQGPPG) are enriched in pro residues. The interval 593 to 1028 (ECEILDIIMK…QTVSRKVALG (436 aa)) is C-terminal globular domain. VWFA domains follow at residues 615–805 (DLLF…LKNV) and 829–1021 (DITI…HQTV). Asn804 and Asn896 each carry an N-linked (GlcNAc...) asparagine glycan.

This sequence belongs to the type VI collagen family. In terms of assembly, trimers composed of three different chains: alpha-1(VI), alpha-2(VI), and alpha-3(VI) or alpha-5(VI) or alpha-6(VI). Post-translationally, prolines at the third position of the tripeptide repeating unit (G-X-Y) are hydroxylated in some or all of the chains.

It localises to the secreted. The protein localises to the extracellular space. Its subcellular location is the extracellular matrix. Functionally, collagen VI acts as a cell-binding protein. This chain is Collagen alpha-1(VI) chain (COL6A1), found in Homo sapiens (Human).